Here is a 177-residue protein sequence, read N- to C-terminus: Large ribosomal subunit protein uL6 (177 aa).

The protein belongs to the universal ribosomal protein uL6 family. In terms of assembly, part of the 50S ribosomal subunit.

In terms of biological role, this protein binds to the 23S rRNA, and is important in its secondary structure. It is located near the subunit interface in the base of the L7/L12 stalk, and near the tRNA binding site of the peptidyltransferase center. This Methylococcus capsulatus (strain ATCC 33009 / NCIMB 11132 / Bath) protein is Large ribosomal subunit protein uL6.